Reading from the N-terminus, the 155-residue chain is Ribosomal RNA large subunit methyltransferase H (155 aa).

Residues Leu72, Gly103, and Leu122–Leu127 contribute to the S-adenosyl-L-methionine site.

The protein belongs to the RNA methyltransferase RlmH family. In terms of assembly, homodimer.

The protein resides in the cytoplasm. It catalyses the reaction pseudouridine(1915) in 23S rRNA + S-adenosyl-L-methionine = N(3)-methylpseudouridine(1915) in 23S rRNA + S-adenosyl-L-homocysteine + H(+). Its function is as follows. Specifically methylates the pseudouridine at position 1915 (m3Psi1915) in 23S rRNA. The sequence is that of Ribosomal RNA large subunit methyltransferase H from Variovorax paradoxus (strain S110).